The chain runs to 166 residues: Small ribosomal subunit protein uS5 (166 aa).

An S5 DRBM domain is found at 11–74 (LNEKLIAVNR…EKARRNMFTI (64 aa)).

The protein belongs to the universal ribosomal protein uS5 family. In terms of assembly, part of the 30S ribosomal subunit. Contacts proteins S4 and S8.

Functionally, with S4 and S12 plays an important role in translational accuracy. In terms of biological role, located at the back of the 30S subunit body where it stabilizes the conformation of the head with respect to the body. The chain is Small ribosomal subunit protein uS5 from Aliivibrio salmonicida (strain LFI1238) (Vibrio salmonicida (strain LFI1238)).